Here is a 1228-residue protein sequence, read N- to C-terminus: Myosin-1 (1228 aa).

Residues 1–27 form a disordered region; that stretch reads MAVTKRAGRRAQGGTQPAKGAQGVKKA. In terms of domain architecture, Myosin motor spans 37–716; it reads VGVSDLTLLS…TLFALEHMRD (680 aa). 130 to 137 provides a ligand contact to ATP; it reads GESGAGKT. At S358 the chain carries Phosphoserine. Residues 405–487 form an actin-binding region; sequence TIGILDIYGF…PGIFAALNDA (83 aa). IQ domains are found at residues 720–740 and 741–768; these read HNMAARIQRAWRRYLAYKTEC and AIKIQRFWRLKRGLDGLKEIQFRDSGHK. Positions 776–962 constitute a TH1 domain; the sequence is RRTYSLIGYR…SGSVQVPPGA (187 aa). 3 disordered regions span residues 953 to 1040, 1053 to 1109, and 1169 to 1228; these read SGSV…AESA, QSLV…PAAP, and QGGA…DDDW. Positions 1053 to 1063 are enriched in polar residues; the sequence is QSLVNPRSGQG. Low complexity predominate over residues 1064 to 1092; that stretch reads QQQQQHHQAYQQPTAAQPAATSYSPAPAK. Residues 1093-1106 show a composition bias toward pro residues; it reads AAPPPPPPAPPAAP. The 62-residue stretch at 1109–1170 folds into the SH3 domain; it reads PAEPTYKALY…PAAYLEEVQG (62 aa). A compositionally biased stretch (low complexity) spans 1180-1194; it reads PTAGGASAGASLAEA.

Belongs to the TRAFAC class myosin-kinesin ATPase superfamily. Myosin family. In terms of processing, phosphorylation of the TEDS site (Ser-358) is required for the polarization of the actin cytoskeleton. Phosphorylation probably activates the myosin-I ATPase activity.

The protein resides in the cytoplasm. Its subcellular location is the cytoskeleton. It is found in the actin patch. Type-I myosin implicated in the organization of the actin cytoskeleton. Required for proper actin cytoskeleton polarization. At the cell cortex, assembles in patch-like structures together with proteins from the actin-polymerizing machinery and promotes actin assembly. Functions as actin nucleation-promoting factor (NPF) for the Arp2/3 complex. The chain is Myosin-1 (MYO1) from Yarrowia lipolytica (strain CLIB 122 / E 150) (Yeast).